The sequence spans 252 residues: Phosphate import ATP-binding protein PstB (252 aa).

The ABC transporter domain occupies 5–247; that stretch reads MRGQDVKVFY…PKEQRTQDYI (243 aa). ATP is bound at residue 37–44; the sequence is GPSGCGKS.

The protein belongs to the ABC transporter superfamily. Phosphate importer (TC 3.A.1.7) family. As to quaternary structure, the complex is composed of two ATP-binding proteins (PstB), two transmembrane proteins (PstC and PstA) and a solute-binding protein (PstS).

It localises to the cell inner membrane. The enzyme catalyses phosphate(out) + ATP + H2O = ADP + 2 phosphate(in) + H(+). In terms of biological role, part of the ABC transporter complex PstSACB involved in phosphate import. Responsible for energy coupling to the transport system. The polypeptide is Phosphate import ATP-binding protein PstB (Bartonella quintana (strain Toulouse) (Rochalimaea quintana)).